A 1110-amino-acid chain; its full sequence is Ribosome assembly protein 1 (1110 aa).

The tr-type G domain maps to 17-262; sequence SCIRNICIVA…QKLGAKRENL (246 aa). Residues 26–33, 102–106, and 156–159 each bind GTP; these read AHVDHGKT, DSPGH, and NKID. Ser431 is subject to Phosphoserine.

The protein belongs to the TRAFAC class translation factor GTPase superfamily. Classic translation factor GTPase family.

Its subcellular location is the cytoplasm. The catalysed reaction is GTP + H2O = GDP + phosphate + H(+). GTPase activity is stimulated in the presence of 60S subunits. Functionally, GTPase involved in the biogenesis of the 60S ribosomal subunit and translational activation of ribosomes. Together with SDO1, may trigger the GTP-dependent release of TIF6 from 60S pre-ribosomes in the cytoplasm, thereby activating ribosomes for translation competence by allowing 80S ribosome assembly and facilitating TIF6 recycling to the nucleus, where it is required for 60S rRNA processing and nuclear export. Inhibits GTPase activity of ribosome-bound EF-2. This Saccharomyces cerevisiae (strain ATCC 204508 / S288c) (Baker's yeast) protein is Ribosome assembly protein 1 (RIA1).